We begin with the raw amino-acid sequence, 868 residues long: Protein translocase subunit SecA (868 aa).

ATP contacts are provided by residues Gln85, 103 to 107 (GEGKT), and Asp508.

This sequence belongs to the SecA family. As to quaternary structure, monomer and homodimer. Part of the essential Sec protein translocation apparatus which comprises SecA, SecYEG and auxiliary proteins SecDF. Other proteins may also be involved.

The protein localises to the cell membrane. The protein resides in the cytoplasm. It catalyses the reaction ATP + H2O + cellular proteinSide 1 = ADP + phosphate + cellular proteinSide 2.. Part of the Sec protein translocase complex. Interacts with the SecYEG preprotein conducting channel. Has a central role in coupling the hydrolysis of ATP to the transfer of proteins into and across the cell membrane, serving as an ATP-driven molecular motor driving the stepwise translocation of polypeptide chains across the membrane. In Deinococcus radiodurans (strain ATCC 13939 / DSM 20539 / JCM 16871 / CCUG 27074 / LMG 4051 / NBRC 15346 / NCIMB 9279 / VKM B-1422 / R1), this protein is Protein translocase subunit SecA.